The following is a 256-amino-acid chain: Thiazole synthase (256 aa).

The Schiff-base intermediate with DXP role is filled by lysine 96. 1-deoxy-D-xylulose 5-phosphate-binding positions include glycine 157, 183-184 (AG), and 205-206 (NT).

It belongs to the ThiG family. As to quaternary structure, homotetramer. Forms heterodimers with either ThiH or ThiS.

Its subcellular location is the cytoplasm. It carries out the reaction [ThiS sulfur-carrier protein]-C-terminal-Gly-aminoethanethioate + 2-iminoacetate + 1-deoxy-D-xylulose 5-phosphate = [ThiS sulfur-carrier protein]-C-terminal Gly-Gly + 2-[(2R,5Z)-2-carboxy-4-methylthiazol-5(2H)-ylidene]ethyl phosphate + 2 H2O + H(+). It functions in the pathway cofactor biosynthesis; thiamine diphosphate biosynthesis. Functionally, catalyzes the rearrangement of 1-deoxy-D-xylulose 5-phosphate (DXP) to produce the thiazole phosphate moiety of thiamine. Sulfur is provided by the thiocarboxylate moiety of the carrier protein ThiS. In vitro, sulfur can be provided by H(2)S. In Clostridioides difficile (strain 630) (Peptoclostridium difficile), this protein is Thiazole synthase.